A 225-amino-acid polypeptide reads, in one-letter code: Protein-L-isoaspartate O-methyltransferase (225 aa).

The active site involves Ser75.

It belongs to the methyltransferase superfamily. L-isoaspartyl/D-aspartyl protein methyltransferase family.

It is found in the cytoplasm. It catalyses the reaction [protein]-L-isoaspartate + S-adenosyl-L-methionine = [protein]-L-isoaspartate alpha-methyl ester + S-adenosyl-L-homocysteine. Catalyzes the methyl esterification of L-isoaspartyl residues in peptides and proteins that result from spontaneous decomposition of normal L-aspartyl and L-asparaginyl residues. It plays a role in the repair and/or degradation of damaged proteins. The sequence is that of Protein-L-isoaspartate O-methyltransferase from Xanthomonas campestris pv. campestris (strain 8004).